Here is a 423-residue protein sequence, read N- to C-terminus: MLDIKLFRTEPEFVKKKLEMRAIDTSIVDEILELDIAARELTARTEELKAKRNKTSEEIAQKKRNKENADDAIKAMREVGEEIKRIDTELNEVSQTLKDKLVRLPNLVSDETPFGKDEDENVEVKKWGTPRTFDFEAKAHWDIVENLKMADFERAAKVSGARFAFLTKDGARLERALMNFMLDTHRANGYEEMVTPQLVNAASMFGTGQLPKFEEDLFKVEKEGLYTIPTSEVPLTNFYRDEILTNDMLPTKFTAMTACFRSEAGSAGRDTRGLIRMHQFNKVEMVRFERPEDSYAALEDMTRSAESILEKLNIPYRTIALCSGDIGFGAAKTYDVEVWLPSYDAYKEISSCSNMTDFQARRANIRFKRDKNAKAELVNTLNGSGLAVGRTFAAVVENYQNEDGSITVPEVLVPYMGGQTVIK.

Residue 230–232 coordinates L-serine; that stretch reads TSE. 261–263 is a binding site for ATP; the sequence is RSE. Glu284 is a binding site for L-serine. 348–351 serves as a coordination point for ATP; the sequence is EISS. Residue Ser384 participates in L-serine binding.

It belongs to the class-II aminoacyl-tRNA synthetase family. Type-1 seryl-tRNA synthetase subfamily. Homodimer. The tRNA molecule binds across the dimer.

The protein resides in the cytoplasm. The enzyme catalyses tRNA(Ser) + L-serine + ATP = L-seryl-tRNA(Ser) + AMP + diphosphate + H(+). The catalysed reaction is tRNA(Sec) + L-serine + ATP = L-seryl-tRNA(Sec) + AMP + diphosphate + H(+). It functions in the pathway aminoacyl-tRNA biosynthesis; selenocysteinyl-tRNA(Sec) biosynthesis; L-seryl-tRNA(Sec) from L-serine and tRNA(Sec): step 1/1. Catalyzes the attachment of serine to tRNA(Ser). Is also able to aminoacylate tRNA(Sec) with serine, to form the misacylated tRNA L-seryl-tRNA(Sec), which will be further converted into selenocysteinyl-tRNA(Sec). The polypeptide is Serine--tRNA ligase (Macrococcus caseolyticus (strain JCSC5402) (Macrococcoides caseolyticum)).